A 127-amino-acid polypeptide reads, in one-letter code: uncharacterized protein (127 aa).

4 helical membrane passes run 1-21 (MYII…YILV), 32-52 (TVAA…LYVF), 68-88 (AFFS…IILV), and 100-120 (ILDN…LVFK).

Belongs to the GtrA family.

The protein resides in the cell membrane. This is an uncharacterized protein from Bacillus subtilis (strain 168).